A 97-amino-acid chain; its full sequence is Large ribosomal subunit protein bL27 (97 aa).

The propeptide occupies 1-12 (MLKMNLANLQLF). Residues 14-37 (HKKGGGSTSNGRDSQAKRLGAKAA) are disordered.

It belongs to the bacterial ribosomal protein bL27 family. Post-translationally, the N-terminus is cleaved by ribosomal processing cysteine protease Prp.

The sequence is that of Large ribosomal subunit protein bL27 from Streptococcus agalactiae serotype III (strain NEM316).